Here is a 352-residue protein sequence, read N- to C-terminus: Thymidine kinase (352 aa).

An ATP-binding site is contributed by 26-33 (GSMGIGKT). Residue glutamate 54 is the Proton acceptor of the active site. Glutamine 95 serves as a coordination point for substrate. Arginine 185 is an ATP binding site. Arginine 191 is a binding site for substrate.

Belongs to the herpesviridae thymidine kinase family. In terms of assembly, homodimer.

It carries out the reaction thymidine + ATP = dTMP + ADP + H(+). Its function is as follows. Catalyzes the transfer of the gamma-phospho group of ATP to thymidine to generate dTMP in the salvage pathway of pyrimidine synthesis. The dTMP serves as a substrate for DNA polymerase during viral DNA replication. Allows the virus to be reactivated and to grow in non-proliferative cells lacking a high concentration of phosphorylated nucleic acid precursors. This chain is Thymidine kinase, found in Gallus gallus (Chicken).